We begin with the raw amino-acid sequence, 141 residues long: MEDKIEFMAKHKKWFVVKKLKIDENTEDIEIARLLASIDETVLNKIPEYLPFDMNKLYEIADGIYQKKKGRITEEEIAEVLKKLKSPATTRKLNEITESKEGKEILKAILNNIILERLGIQTRVSPKVIEKYIENSQSSNR.

This is an uncharacterized protein from Methanocaldococcus jannaschii (strain ATCC 43067 / DSM 2661 / JAL-1 / JCM 10045 / NBRC 100440) (Methanococcus jannaschii).